The following is a 206-amino-acid chain: Ras-related protein Ral-B (206 aa).

Residue glycine 21–alanine 29 participates in GTP binding. Residues tyrosine 43 to tyrosine 51 carry the Effector region motif. Residues aspartate 68–glutamine 72, asparagine 128–aspartate 131, and serine 158–lysine 160 each bind GTP. A disordered region spans residues methionine 181–leucine 206. The residue at position 203 (cysteine 203) is a Cysteine methyl ester. A lipid anchor (S-geranylgeranyl cysteine) is attached at cysteine 203. Residues cysteine 204–leucine 206 constitute a propeptide, removed in mature form.

This sequence belongs to the small GTPase superfamily. Ras family. Interacts with EXOC2/Sec5 and EXOC8/Exo84. Interacts (via effector domain) with RALBP1. In terms of processing, prenylation is essential for membrane localization. Post-translationally, the farnesylated form confers resistance to the proapoptotic and anti-anchorage-dependent growth effects of some geranylgeranyltransferase I inhibitors.

Its subcellular location is the cell membrane. The protein localises to the midbody. It carries out the reaction GTP + H2O = GDP + phosphate + H(+). Alternates between an inactive form bound to GDP and an active form bound to GTP. Activated by a guanine nucleotide-exchange factor (GEF) and inactivated by a GTPase-activating protein (GAP). In terms of biological role, multifunctional GTPase involved in a variety of cellular processes including gene expression, cell migration, cell proliferation, oncogenic transformation and membrane trafficking. Accomplishes its multiple functions by interacting with distinct downstream effectors. Acts as a GTP sensor for GTP-dependent exocytosis of dense core vesicles. Required both to stabilize the assembly of the exocyst complex and to localize functional exocyst complexes to the leading edge of migrating cells. Required for suppression of apoptosis. In late stages of cytokinesis, upon completion of the bridge formation between dividing cells, mediates exocyst recruitment to the midbody to drive abscission. Involved in ligand-dependent receptor mediated endocytosis of the EGF and insulin receptors. This is Ras-related protein Ral-B (Ralb) from Mus musculus (Mouse).